A 363-amino-acid polypeptide reads, in one-letter code: Mitochondrial phosphate carrier protein 2, mitochondrial (363 aa).

A helical transmembrane segment spans residues 65–85 (AYFAACTVAGMLSCGITHTAI). Solcar repeat units follow at residues 65-149 (AYFA…AKKY), 162-246 (YKTL…TVEL), and 263-342 (VQLG…VKVL). The Mitochondrial matrix portion of the chain corresponds to 86-123 (TPLDVIKCNMQIDPLKYKNITSAFKTTIKEQGLKGFTR). The chain crosses the membrane as a helical span at residues 124–143 (GWSPTLLGYSAQGAFKYGLY). The Mitochondrial intermembrane segment spans residues 144-164 (EYAKKYYSDIVGPEYAAKYKT). A helical transmembrane segment spans residues 165–185 (LIYLAGSASAEIVADVALCPM). The Mitochondrial matrix portion of the chain corresponds to 186-220 (EAVKVRVQTQPGFARGLSDGLPKIIKSEGFRGLHK). The chain crosses the membrane as a helical span at residues 221-240 (GLVPLWGRQIPYTMMKFATF). The Mitochondrial intermembrane portion of the chain corresponds to 241 to 261 (ENTVELIYKKVMPTPKEECSK). Residues 262 to 282 (PVQLGVSFAGGYIAGIFCAII) form a helical membrane-spanning segment. Residues 283 to 321 (SHPADNLVSFLNNSKGATVADAVKRLGLWGMLTRGLPLR) lie on the Mitochondrial matrix side of the membrane. A helical membrane pass occupies residues 322–342 (IFMIGTLTGAQWVIYDAVKVL). Topologically, residues 343-363 (AGLPTTGGASPATALAPSVSA) are mitochondrial intermembrane.

This sequence belongs to the mitochondrial carrier (TC 2.A.29) family. As to expression, expressed in leaves. Strong expression in senescent leaves.

It is found in the mitochondrion inner membrane. Functionally, transport of phosphate groups from the cytosol to the mitochondrial matrix. Mediates salt stress tolerance through an ATP-dependent pathway and via modulation of the gibberellin metabolism. This chain is Mitochondrial phosphate carrier protein 2, mitochondrial (MPT2), found in Arabidopsis thaliana (Mouse-ear cress).